The chain runs to 312 residues: HPr kinase/phosphorylase (312 aa).

Catalysis depends on residues His-139 and Lys-160. 154–161 lines the ATP pocket; the sequence is GSSGVGKS. A Mg(2+)-binding site is contributed by Ser-161. Asp-178 (proton acceptor; for phosphorylation activity. Proton donor; for dephosphorylation activity) is an active-site residue. Residues 202–211 form an important for the catalytic mechanism of both phosphorylation and dephosphorylation region; the sequence is LEIRGLGIIN. Residue Glu-203 participates in Mg(2+) binding. Residue Arg-244 is part of the active site. The tract at residues 265–270 is important for the catalytic mechanism of dephosphorylation; sequence PVRPGR.

The protein belongs to the HPrK/P family. Homohexamer. Mg(2+) serves as cofactor.

It catalyses the reaction [HPr protein]-L-serine + ATP = [HPr protein]-O-phospho-L-serine + ADP + H(+). The enzyme catalyses [HPr protein]-O-phospho-L-serine + phosphate + H(+) = [HPr protein]-L-serine + diphosphate. Functionally, catalyzes the ATP- as well as the pyrophosphate-dependent phosphorylation of a specific serine residue in HPr, a phosphocarrier protein of the phosphoenolpyruvate-dependent sugar phosphotransferase system (PTS). HprK/P also catalyzes the pyrophosphate-producing, inorganic phosphate-dependent dephosphorylation (phosphorolysis) of seryl-phosphorylated HPr (P-Ser-HPr). The two antagonistic activities of HprK/P are regulated by several intracellular metabolites, which change their concentration in response to the absence or presence of rapidly metabolisable carbon sources (glucose, fructose, etc.) in the growth medium. Therefore, by controlling the phosphorylation state of HPr, HPrK/P is a sensor enzyme that plays a major role in the regulation of carbon metabolism and sugar transport: it mediates carbon catabolite repression (CCR), and regulates PTS-catalyzed carbohydrate uptake and inducer exclusion. The protein is HPr kinase/phosphorylase of Listeria innocua serovar 6a (strain ATCC BAA-680 / CLIP 11262).